We begin with the raw amino-acid sequence, 424 residues long: Elongation factor 1-alpha (424 aa).

Residues 5-223 (KPHMNLVIIG…NALQVPAKPV (219 aa)) form the tr-type G domain. The segment at 14 to 21 (GHVDHGKS) is G1. Position 14 to 21 (14 to 21 (GHVDHGKS)) interacts with GTP. Residue S21 coordinates Mg(2+). The G2 stretch occupies residues 70-74 (GVTID). The interval 91 to 94 (DAPG) is G3. GTP is bound by residues 91 to 95 (DAPGH) and 148 to 151 (NKMD). Positions 148-151 (NKMD) are G4. The segment at 187 to 189 (SGY) is G5.

Belongs to the TRAFAC class translation factor GTPase superfamily. Classic translation factor GTPase family. EF-Tu/EF-1A subfamily.

Its subcellular location is the cytoplasm. The enzyme catalyses GTP + H2O = GDP + phosphate + H(+). Functionally, GTP hydrolase that promotes the GTP-dependent binding of aminoacyl-tRNA to the A-site of ribosomes during protein biosynthesis. This is Elongation factor 1-alpha from Picrophilus torridus (strain ATCC 700027 / DSM 9790 / JCM 10055 / NBRC 100828 / KAW 2/3).